A 570-amino-acid chain; its full sequence is AT-rich interactive domain-containing protein 3A (570 aa).

The tract at residues Ala102–His215 is disordered. The segment covering Asp120–Glu160 has biased composition (acidic residues). At Ser179 the chain carries Phosphoserine. Positions Asp232–Arg324 constitute an ARID domain. At Ser356 the chain carries Phosphoserine. Positions Ala429 to Ile523 constitute an REKLES domain. Residues Ala430–Gln473 form an important for nuclear localization region. The tract at residues Pro475–Thr495 is homodimerization. Residues Arg519 to Arg531 are important for cytoplasmic localization. The disordered stretch occupies residues Ser528–Pro570. A phosphoserine mark is found at Ser542 and Ser569. Residues Ser548–Pro570 are compositionally biased toward low complexity.

As to quaternary structure, homodimer.

It is found in the nucleus. It localises to the cytoplasm. Its function is as follows. Transcription factor. This chain is AT-rich interactive domain-containing protein 3A (arid3a), found in Danio rerio (Zebrafish).